A 1309-amino-acid polypeptide reads, in one-letter code: Phospholipase A I (1309 aa).

LRR repeat units lie at residues Leu-155–Leu-178, Asn-180–Cys-201, Gly-203–Ala-223, and Met-224–Gln-248. 3 ARM repeats span residues Asp-315 to Arg-356, Ser-401 to Phe-439, and Cys-440 to Glu-481. Residues Leu-502–Ile-746 form the PNPLA domain. A GXGXXG motif is present at residues Gly-506–Gly-511. Residues Gly-538–Gly-542 carry the GXSXG motif. The active-site Nucleophile is the Ser-540. The active-site Proton acceptor is Asp-733. Residues Asp-733–Ala-735 carry the DGA/G motif. The tract at residues Val-1183–Arg-1253 is disordered. The segment covering Asn-1188 to Asp-1208 has biased composition (polar residues). Residues Gly-1216 to Glu-1235 are compositionally biased toward acidic residues.

It belongs to the patatin family.

The protein resides in the plastid. It is found in the chloroplast. Its function is as follows. Possesses non-specific lipolytic acyl hydrolase (LAH) activity. Catalyzes the hydrolysis of the galactolipids monogalactosyldiacylglycerol (MGDG) and digalactosyldiacylglycerol (DGDG), and less efficiently the phoshpolipids phosphatidylcholine (PC), phosphatidylethanolamine (PE), phosphatidylglycerol (PG), phosphatidylserine (PS) and phosphatidylinositol (PI). Hydrolyzes phospholipids at both the sn-1 and sn-2 positions. Involved in basal jasmonic acid production and promotes resistance to the necrotrophic fungal pathogen Botrytis cinerea. The sequence is that of Phospholipase A I (PLA1) from Arabidopsis thaliana (Mouse-ear cress).